The primary structure comprises 151 residues: Deoxyuridine 5'-triphosphate nucleotidohydrolase (151 aa).

Substrate-binding positions include 70–72, asparagine 83, 87–89, and methionine 97; these read RSG and LID.

The protein belongs to the dUTPase family. It depends on Mg(2+) as a cofactor.

It carries out the reaction dUTP + H2O = dUMP + diphosphate + H(+). Its pathway is pyrimidine metabolism; dUMP biosynthesis; dUMP from dCTP (dUTP route): step 2/2. Its function is as follows. This enzyme is involved in nucleotide metabolism: it produces dUMP, the immediate precursor of thymidine nucleotides and it decreases the intracellular concentration of dUTP so that uracil cannot be incorporated into DNA. The polypeptide is Deoxyuridine 5'-triphosphate nucleotidohydrolase (Pseudomonas putida (strain ATCC 47054 / DSM 6125 / CFBP 8728 / NCIMB 11950 / KT2440)).